The primary structure comprises 303 residues: Glycine--tRNA ligase alpha subunit (303 aa).

The protein belongs to the class-II aminoacyl-tRNA synthetase family. In terms of assembly, tetramer of two alpha and two beta subunits.

Its subcellular location is the cytoplasm. The catalysed reaction is tRNA(Gly) + glycine + ATP = glycyl-tRNA(Gly) + AMP + diphosphate. The sequence is that of Glycine--tRNA ligase alpha subunit from Streptococcus equi subsp. zooepidemicus (strain H70).